A 271-amino-acid polypeptide reads, in one-letter code: Tropinone reductase homolog At2g29360 (271 aa).

An NADP(+)-binding site is contributed by Leu-22–His-46. Residue Ser-155 participates in substrate binding. The Proton acceptor role is filled by Tyr-168.

It belongs to the short-chain dehydrogenases/reductases (SDR) family. SDR65C subfamily.

Functionally, oxidoreductase active on cyclic ketones, but not on tropinone or nortropinone. This is Tropinone reductase homolog At2g29360 from Arabidopsis thaliana (Mouse-ear cress).